Consider the following 252-residue polypeptide: 5-oxoprolinase subunit A (252 aa).

The protein belongs to the LamB/PxpA family. In terms of assembly, forms a complex composed of PxpA, PxpB and PxpC.

The catalysed reaction is 5-oxo-L-proline + ATP + 2 H2O = L-glutamate + ADP + phosphate + H(+). Its function is as follows. Catalyzes the cleavage of 5-oxoproline to form L-glutamate coupled to the hydrolysis of ATP to ADP and inorganic phosphate. The polypeptide is 5-oxoprolinase subunit A (Mycolicibacterium gilvum (strain PYR-GCK) (Mycobacterium gilvum (strain PYR-GCK))).